A 421-amino-acid chain; its full sequence is Tyrosine-protein phosphatase non-receptor type 20 (421 aa).

The tract at residues 1 to 58 is disordered; sequence MSSPGNVRQKHGRDNDEHEGDSDDLNLQKSLPSSSQQKTPTKPVFGNKVNSESVKTSH. Over residues 27–41 the composition is skewed to low complexity; sequence LQKSLPSSSQQKTPT. Polar residues predominate over residues 48–58; it reads KVNSESVKTSH. Position 76 is a phosphoserine (serine 76). The tract at residues 93–116 is disordered; it reads RWSSVDPESAGPSKTVSTVLSESS. Polar residues predominate over residues 104-116; the sequence is PSKTVSTVLSESS. Phosphoserine is present on serine 122. The Tyrosine-protein phosphatase domain occupies 160–413; it reads IIREFLELEE…QFCYEIVLEV (254 aa). Substrate is bound by residues aspartate 324, 354–360, and glutamine 398; that span reads CSAGVGR. Cysteine 354 acts as the Phosphocysteine intermediate in catalysis.

Belongs to the protein-tyrosine phosphatase family. Non-receptor class subfamily.

The protein localises to the nucleus. It localises to the cytoplasm. The protein resides in the cytoskeleton. Its subcellular location is the microtubule organizing center. It is found in the centrosome. The enzyme catalyses O-phospho-L-tyrosyl-[protein] + H2O = L-tyrosyl-[protein] + phosphate. Functionally, tyrosine-protein phosphatase targeted to sites of actin polymerization in response of varied extracellular stimuli. Has tyrosine phosphatase activity towards various tyrosyl phosphorylated substrates. The protein is Tyrosine-protein phosphatase non-receptor type 20 (Ptpn20) of Rattus norvegicus (Rat).